Reading from the N-terminus, the 200-residue chain is Putative peroxiredoxin sll0755 (200 aa).

Residues 5–163 (LRVGQPAPDF…TLRVLKAIRH (159 aa)) form the Thioredoxin domain. Cys50 serves as the catalytic Cysteine sulfenic acid (-SOH) intermediate.

It belongs to the peroxiredoxin family. AhpC/Prx1 subfamily. In terms of assembly, homodimer; disulfide-linked, upon oxidation.

The protein resides in the cytoplasm. It carries out the reaction a hydroperoxide + [thioredoxin]-dithiol = an alcohol + [thioredoxin]-disulfide + H2O. Functionally, thiol-specific peroxidase that catalyzes the reduction of hydrogen peroxide and organic hydroperoxides to water and alcohols, respectively. Plays a role in cell protection against oxidative stress by detoxifying peroxides. This chain is Putative peroxiredoxin sll0755, found in Synechocystis sp. (strain ATCC 27184 / PCC 6803 / Kazusa).